Here is a 391-residue protein sequence, read N- to C-terminus: Mannose-6-phosphate isomerase (391 aa).

Zn(2+) is bound by residues Gln-97, His-99, Glu-134, and His-255. The active site involves Arg-274. At Lys-280 the chain carries N6-acetyllysine.

It belongs to the mannose-6-phosphate isomerase type 1 family. Requires Zn(2+) as cofactor.

It is found in the cytoplasm. It carries out the reaction D-mannose 6-phosphate = D-fructose 6-phosphate. Involved in the conversion of glucose to GDP-L-fucose, which can be converted to L-fucose, a capsular polysaccharide. The protein is Mannose-6-phosphate isomerase (manA) of Escherichia coli (strain K12).